The chain runs to 336 residues: Holliday junction branch migration complex subunit RuvB (336 aa).

Positions 1 to 182 (MKERIVNLET…FGMSFRMQFY (182 aa)) are large ATPase domain (RuvB-L). ATP is bound by residues Leu-21, Arg-22, Gly-63, Lys-66, Thr-67, Ser-68, 129-131 (EDF), Arg-172, Tyr-182, and Arg-219. A Mg(2+)-binding site is contributed by Thr-67. The small ATPAse domain (RuvB-S) stretch occupies residues 183 to 253 (SPSELALIIK…ITLHALNELG (71 aa)). A head domain (RuvB-H) region spans residues 256–336 (ELGFDEADLA…IPTLKSQTLF (81 aa)). Arg-310 and Arg-315 together coordinate DNA.

Belongs to the RuvB family. In terms of assembly, homohexamer. Forms an RuvA(8)-RuvB(12)-Holliday junction (HJ) complex. HJ DNA is sandwiched between 2 RuvA tetramers; dsDNA enters through RuvA and exits via RuvB. An RuvB hexamer assembles on each DNA strand where it exits the tetramer. Each RuvB hexamer is contacted by two RuvA subunits (via domain III) on 2 adjacent RuvB subunits; this complex drives branch migration. In the full resolvosome a probable DNA-RuvA(4)-RuvB(12)-RuvC(2) complex forms which resolves the HJ.

Its subcellular location is the cytoplasm. It catalyses the reaction ATP + H2O = ADP + phosphate + H(+). Functionally, the RuvA-RuvB-RuvC complex processes Holliday junction (HJ) DNA during genetic recombination and DNA repair, while the RuvA-RuvB complex plays an important role in the rescue of blocked DNA replication forks via replication fork reversal (RFR). RuvA specifically binds to HJ cruciform DNA, conferring on it an open structure. The RuvB hexamer acts as an ATP-dependent pump, pulling dsDNA into and through the RuvAB complex. RuvB forms 2 homohexamers on either side of HJ DNA bound by 1 or 2 RuvA tetramers; 4 subunits per hexamer contact DNA at a time. Coordinated motions by a converter formed by DNA-disengaged RuvB subunits stimulates ATP hydrolysis and nucleotide exchange. Immobilization of the converter enables RuvB to convert the ATP-contained energy into a lever motion, pulling 2 nucleotides of DNA out of the RuvA tetramer per ATP hydrolyzed, thus driving DNA branch migration. The RuvB motors rotate together with the DNA substrate, which together with the progressing nucleotide cycle form the mechanistic basis for DNA recombination by continuous HJ branch migration. Branch migration allows RuvC to scan DNA until it finds its consensus sequence, where it cleaves and resolves cruciform DNA. The polypeptide is Holliday junction branch migration complex subunit RuvB (Helicobacter pylori (strain HPAG1)).